The primary structure comprises 651 residues: Protein EXECUTER 2, chloroplastic (651 aa).

The N-terminal 69 residues, 1-69 (MATTQPCLIG…KAPSLSCLRN (69 aa)), are a transit peptide targeting the chloroplast. Positions 103–138 (ESVVSLLKSQLEDAVEKEDFEEAVKLKQAISEATVD) constitute a UVR domain. The interval 330-359 (DATEELVGEGTEETNSSDDEEEVEEEENDS) is disordered.

It is found in the plastid. Its subcellular location is the chloroplast. Its function is as follows. Together with EX1, enables higher plants to perceive singlet oxygen as a stress signal in plastid that activates a genetically determined nuclear stress response program which triggers a programmed cell death (PCD). This transfer of singlet oxygen-induced stress-related signals from the plastid to the nucleus that triggers genetically controlled PCD pathway is unique to photosynthetic eukaryotes and operates under mild stress conditions, impeding photosystem II (PSII) without causing photooxidative damage of the plant. The protein is Protein EXECUTER 2, chloroplastic of Arabidopsis thaliana (Mouse-ear cress).